A 1342-amino-acid chain; its full sequence is DNA-directed RNA polymerase subunit beta (1342 aa).

This sequence belongs to the RNA polymerase beta chain family. The RNAP catalytic core consists of 2 alpha, 1 beta, 1 beta' and 1 omega subunit. When a sigma factor is associated with the core the holoenzyme is formed, which can initiate transcription.

The enzyme catalyses RNA(n) + a ribonucleoside 5'-triphosphate = RNA(n+1) + diphosphate. DNA-dependent RNA polymerase catalyzes the transcription of DNA into RNA using the four ribonucleoside triphosphates as substrates. In Yersinia enterocolitica serotype O:8 / biotype 1B (strain NCTC 13174 / 8081), this protein is DNA-directed RNA polymerase subunit beta.